The chain runs to 367 residues: Anhydro-N-acetylmuramic acid kinase (367 aa).

Residue 13 to 20 (GTSMDGAD) coordinates ATP.

The protein belongs to the anhydro-N-acetylmuramic acid kinase family.

It catalyses the reaction 1,6-anhydro-N-acetyl-beta-muramate + ATP + H2O = N-acetyl-D-muramate 6-phosphate + ADP + H(+). The protein operates within amino-sugar metabolism; 1,6-anhydro-N-acetylmuramate degradation. It participates in cell wall biogenesis; peptidoglycan recycling. Catalyzes the specific phosphorylation of 1,6-anhydro-N-acetylmuramic acid (anhMurNAc) with the simultaneous cleavage of the 1,6-anhydro ring, generating MurNAc-6-P. Is required for the utilization of anhMurNAc either imported from the medium or derived from its own cell wall murein, and thus plays a role in cell wall recycling. The protein is Anhydro-N-acetylmuramic acid kinase of Neisseria meningitidis serogroup C / serotype 2a (strain ATCC 700532 / DSM 15464 / FAM18).